The chain runs to 54 residues: MLQLVEESSKDAGIRXLVMLDEQGEQLERVVDEREQMAISGGFIRIMEKMLGSG.

Belongs to the SNAP-25 family. As to quaternary structure, part of the SNARE core complex containing SNAP25, VAMP2 and STX1A; this complex binds CPLX1. Found in a complex containing SYT1, SV2B and syntaxin-1. Found in a ternary complex with STX1A and VAMP8. Interacts with HSC70 and with SYT9, forming a complex with DNAJC5. The interaction with SYT9 is inhibited in presence of calcium. Isoform 1 and isoform 2 interact with BLOC1S6. Interacts with CENPF. Interacts with EQTN. Interacts with HGS. Interacts with KCNB1 (via N-terminus); reduces the voltage-dependent potassium channel KCNB1 activity in pancreatic beta cells. Interacts with OTOF. Interacts with RIMS1. Interacts with SNAPIN. Interacts with STXBP6. Interacts with TRIM9. Interacts with ZDHHC13 (via ANK repeats). Interacts with ZDHHC17 (via ANK repeats). Associates with the BLOC-1 complex. Interacts with PLCL1 (via C2 domain). Interacts with PRRT2; this interaction may impair the formation of the SNARE complex. Interacts with alpha-synuclein/SNCA. Interacts with PRPH2. Interacts with ROM1. Interacts with STX3. Post-translationally, the N-terminus is blocked.

The protein localises to the cytoplasm. The protein resides in the perinuclear region. Its subcellular location is the cell membrane. It localises to the synapse. It is found in the synaptosome. The protein localises to the photoreceptor inner segment. Its function is as follows. t-SNARE involved in the molecular regulation of neurotransmitter release. May play an important role in the synaptic function of specific neuronal systems. Associates with proteins involved in vesicle docking and membrane fusion. Regulates plasma membrane recycling through its interaction with CENPF. Modulates the gating characteristics of the delayed rectifier voltage-dependent potassium channel KCNB1 in pancreatic beta cells. This chain is Synaptosomal-associated protein 25 (SNAP25), found in Oryctolagus cuniculus (Rabbit).